The chain runs to 479 residues: MAQHAVYFPDAFLTQMREAMPSTLSFDEFISACQRPLRRSIRINTLKISVADFLALIAPYGWSLTPIPWCHEGFWIERDDEEALPLGSTAEHLSGLFYIQEASSMLPVAALFADDNHPQRVMDMAAAPGSKTTQIAARMGNRGAILANEFSASRVKVLHANISRCGIANTALTHFDGRVFGAALPEMFDAILLDAPCSGEGVVRKDPDALKNWSPESNLDIAATQRELLDSAFHALRPGGTLVYSTCTLNRQENEAVCLWLKETYADAVEFLPLGDLFPDADRALTPEGFLHVFPQIYDCEGFFVARLRKMSSLPAMPAPGYKVGAFPFTPLKGREALHVTQAANAVGLLWDENLHLWQRDKEVWLFPAEIESLIGKVRFSRLGIKLAESHNKGYRWQHEATIALACPTHAHAFELSAQEAEEWYRGRDIYPQTPPAADDVLVTFQHQPLGLAKRIGARIKNSYPRELVRDGKLFTGNS.

Residues 125–131 (AAAPGSK), Glu-149, Asp-176, and Asp-194 contribute to the S-adenosyl-L-methionine site. Catalysis depends on Cys-247, which acts as the Nucleophile.

Belongs to the class I-like SAM-binding methyltransferase superfamily. RsmB/NOP family.

The protein localises to the cytoplasm. The catalysed reaction is cytidine(1407) in 16S rRNA + S-adenosyl-L-methionine = 5-methylcytidine(1407) in 16S rRNA + S-adenosyl-L-homocysteine + H(+). In terms of biological role, specifically methylates the cytosine at position 1407 (m5C1407) of 16S rRNA. This is Ribosomal RNA small subunit methyltransferase F from Salmonella schwarzengrund (strain CVM19633).